We begin with the raw amino-acid sequence, 223 residues long: Phosphoribosylformylglycinamidine synthase subunit PurQ (223 aa).

In terms of domain architecture, Glutamine amidotransferase type-1 spans 3 to 223 (FAVLVFPGSN…MVKSWREQHV (221 aa)). Catalysis depends on Cys-85, which acts as the Nucleophile. Residues His-193 and Glu-195 contribute to the active site.

Part of the FGAM synthase complex composed of 1 PurL, 1 PurQ and 2 PurS subunits.

Its subcellular location is the cytoplasm. It catalyses the reaction N(2)-formyl-N(1)-(5-phospho-beta-D-ribosyl)glycinamide + L-glutamine + ATP + H2O = 2-formamido-N(1)-(5-O-phospho-beta-D-ribosyl)acetamidine + L-glutamate + ADP + phosphate + H(+). The catalysed reaction is L-glutamine + H2O = L-glutamate + NH4(+). It functions in the pathway purine metabolism; IMP biosynthesis via de novo pathway; 5-amino-1-(5-phospho-D-ribosyl)imidazole from N(2)-formyl-N(1)-(5-phospho-D-ribosyl)glycinamide: step 1/2. In terms of biological role, part of the phosphoribosylformylglycinamidine synthase complex involved in the purines biosynthetic pathway. Catalyzes the ATP-dependent conversion of formylglycinamide ribonucleotide (FGAR) and glutamine to yield formylglycinamidine ribonucleotide (FGAM) and glutamate. The FGAM synthase complex is composed of three subunits. PurQ produces an ammonia molecule by converting glutamine to glutamate. PurL transfers the ammonia molecule to FGAR to form FGAM in an ATP-dependent manner. PurS interacts with PurQ and PurL and is thought to assist in the transfer of the ammonia molecule from PurQ to PurL. The chain is Phosphoribosylformylglycinamidine synthase subunit PurQ from Staphylococcus aureus (strain bovine RF122 / ET3-1).